Here is a 392-residue protein sequence, read N- to C-terminus: Chloramphenicol resistance protein (392 aa).

The next 12 helical transmembrane spans lie at 6-26 (YLLA…AGLV), 42-62 (TLTS…AALA), 71-91 (LLGF…TTSF), 100-120 (VAAL…AALV), 129-149 (LAVL…GGSL), 160-180 (FWAV…AIPA), 205-225 (LLLA…SFTF), 239-259 (LWIS…VTVA), 268-288 (AQVL…LAML), 294-314 (ALLT…STLI), 332-352 (ATAA…TTLG), and 358-378 (LGPL…AFPF).

This sequence belongs to the major facilitator superfamily.

It is found in the cell membrane. The chain is Chloramphenicol resistance protein (cmlR) from Streptomyces lividans.